A 340-amino-acid polypeptide reads, in one-letter code: Lipopolysaccharide core biosynthesis glycosyltransferase LpsE (340 aa).

Belongs to the glycosyltransferase group 1 family. Glycosyltransferase 4 subfamily.

It participates in bacterial outer membrane biogenesis; LPS core biosynthesis. This chain is Lipopolysaccharide core biosynthesis glycosyltransferase LpsE (lpsE), found in Rhizobium meliloti (strain 1021) (Ensifer meliloti).